The following is a 349-amino-acid chain: Farnesyl pyrophosphate synthase vrtD (349 aa).

Isopentenyl diphosphate is bound by residues lysine 53, arginine 56, and glutamine 92. The Mg(2+) site is built by aspartate 99 and aspartate 103. Dimethylallyl diphosphate is bound at residue arginine 108. Residue arginine 109 coordinates isopentenyl diphosphate. Lysine 196, threonine 197, glutamine 236, lysine 253, and lysine 262 together coordinate dimethylallyl diphosphate.

This sequence belongs to the FPP/GGPP synthase family. Requires Mg(2+) as cofactor.

The enzyme catalyses isopentenyl diphosphate + dimethylallyl diphosphate = (2E)-geranyl diphosphate + diphosphate. It carries out the reaction isopentenyl diphosphate + (2E)-geranyl diphosphate = (2E,6E)-farnesyl diphosphate + diphosphate. It functions in the pathway secondary metabolite biosynthesis; terpenoid biosynthesis. Functionally, farnesyl pyrophosphate synthase; part of the gene cluster that mediates the biosynthesis of viridicatumtoxin, a tetracycline-like fungal meroterpenoid with a unique, fused spirobicyclic ring system. The first step of the pathway is the production of the malonamoyl-CoA starter unit for the polyketide synthase vrtA. The aldolase vrtJ may be involved in the synthesis of the malonamate substrate for malonamoyl-CoA synthetase vrtB. The polyketide synthase vrtA then may utilize the malonamoyl-CoA starter unit, followed by sequential condensation of eight malonyl-CoA units to form the polyketide backbone. The cyclization of the last ring could be mediated by the lactamase-like protein vrtG. The proposed post-PKS tailoring steps are a hydroxylation at C5 catalyzed the cytochrome P450 monooxygenase vrtE, a hydroxylation at C12a catalyzed by VrtH and/or VrtI, and an O-methylation by the O-methyltransferase vrtF. VrtC is then proposed to catalyze the transfer of a geranyl group synthesized by vrtD to the aromatic C ring of the tetracyclic polyketide intermediate of viridicatumtoxin to yield previridicatumtoxin. Finally, the cytochrome P450 monooxygenase vrtK catalyzes the spirocyclization of the geranyl moiety of previridicatumtoxin to afford viridicatumtoxin. The polypeptide is Farnesyl pyrophosphate synthase vrtD (Penicillium aethiopicum).